The following is a 170-amino-acid chain: uncharacterized protein (170 aa).

An N-terminal signal peptide occupies residues 1 to 28; that stretch reads MTGGVMSQKFVVGAGLLVCSVCSLSAMA.

This sequence belongs to the fimbrial protein family.

Its function is as follows. Part of the yfcOPQRSUV fimbrial operon. Could contribute to adhesion to various surfaces in specific environmental niches. Increases adhesion to eukaryotic T24 bladder epithelial cells in the absence of fim genes. This is an uncharacterized protein from Escherichia coli (strain K12).